Here is a 148-residue protein sequence, read N- to C-terminus: 3-dehydroquinate dehydratase (148 aa).

Tyrosine 26 functions as the Proton acceptor in the catalytic mechanism. 3 residues coordinate substrate: asparagine 75, histidine 81, and aspartate 88. The active-site Proton donor is histidine 101. Residues 102-103 and arginine 112 contribute to the substrate site; that span reads LS.

It belongs to the type-II 3-dehydroquinase family. As to quaternary structure, homododecamer.

The enzyme catalyses 3-dehydroquinate = 3-dehydroshikimate + H2O. It participates in metabolic intermediate biosynthesis; chorismate biosynthesis; chorismate from D-erythrose 4-phosphate and phosphoenolpyruvate: step 3/7. Functionally, catalyzes a trans-dehydration via an enolate intermediate. This chain is 3-dehydroquinate dehydratase, found in Shewanella frigidimarina (strain NCIMB 400).